The primary structure comprises 213 residues: Glutamine amidotransferase-like class 1 domain-containing protein 1 (213 aa).

A signal peptide spans 1-20; sequence MTSKPTCLIVASAASAGVSA.

This sequence belongs to the peptidase C56 family. In terms of assembly, homotetramer. Component of the FERRY complex.

It localises to the secreted. It is found in the early endosome. Its function is as follows. Component of the FERRY complex (Five-subunit Endosomal Rab5 and RNA/ribosome intermediary). The FERRY complex directly interacts with mRNAs and RAB5A, and functions as a RAB5A effector involved in the localization and the distribution of specific mRNAs most likely by mediating their endosomal transport. The complex recruits mRNAs and ribosomes to early endosomes through direct mRNA-interaction. The sequence is that of Glutamine amidotransferase-like class 1 domain-containing protein 1 from Danio rerio (Zebrafish).